Consider the following 565-residue polypeptide: Transmembrane 7 superfamily member 3 (565 aa).

Residues 1-21 (MWRLRLLVLAVLAAGSAEAQA) form the signal peptide. N-linked (GlcNAc...) asparagine glycans are attached at residues N22, N56, N70, and N259. Helical transmembrane passes span 287 to 307 (VSTK…CFFG), 315 to 335 (LFFV…TRLT), 341 to 361 (VRLA…VASW), 364 to 384 (FGIL…LVSS), 402 to 422 (VFWV…MGCL), 427 to 447 (ILAC…SYMF), and 478 to 498 (NDYI…TLQI).

The protein resides in the cell membrane. Its function is as follows. Involved in the inhibition of cytokine-induced death of pancreatic beta cells. Involved in the promotion of insulin secretion from pancreatic beta cells. Is a downstream transcriptional target of p53/TP53, and acts as a pro-survival homeostatic factor that attenuates the development of cellular stress. Maintains protein homeostasis and promotes cell survival through attenuation of endoplasmic reticulum (ER) stress and the subsequent induction of unfolded protein response (UPR). This Mus musculus (Mouse) protein is Transmembrane 7 superfamily member 3 (Tm7sf3).